The primary structure comprises 670 residues: Soluble lamin-associated protein of 75 kDa (670 aa).

2 disordered regions span residues 273–301 (PKRP…SSEM) and 314–670 (STSE…AKLT). The residue at position 350 (Ser-350) is a Phosphoserine. A compositionally biased stretch (polar residues) spans 358-375 (SQTSLTASINKLESTARP). Acidic residues predominate over residues 378-387 (SSEEFLEEEP). Ser-379 is subject to Phosphoserine. The segment covering 414–423 (EKQDGEKESE) has biased composition (basic and acidic residues). Acidic residues predominate over residues 442-453 (TEEEDSTSEVLD). The residue at position 449 (Ser-449) is a Phosphoserine. A compositionally biased stretch (polar residues) spans 460–470 (PFNSSEDSTNL). 2 stretches are compositionally biased toward basic and acidic residues: residues 479–494 (KPPE…RIPD) and 504–514 (SDEKGHMEEKL). At Ser-515 the chain carries Phosphoserine. Polar residues-rich tracts occupy residues 558-569 (ENLSPNTTSSLE) and 579-591 (PQET…QSSL). 3 positions are modified to phosphoserine: Ser-615, Ser-618, and Ser-635. Over residues 651 to 670 (NLRRKAKGHKGPAKKKAKLT) the composition is skewed to basic residues.

It belongs to the FAM169 family.

The protein localises to the nucleus envelope. Its subcellular location is the nucleus inner membrane. This is Soluble lamin-associated protein of 75 kDa (FAM169A) from Homo sapiens (Human).